The following is a 494-amino-acid chain: Paired box protein Pax-2-B (494 aa).

Residues 15-141 (RHGGVNQLGG…SSINRIIRTK (127 aa)) constitute a DNA-binding region (paired). A PAI subdomain region spans residues 18 to 74 (GVNQLGGVFVNGRPLPDVVRQRIVELAHQGVRPCDISRQLRVSHGCVSKILGRYYET). Positions 93–141 (KVVDKIADYKRQNPTMFAWEIRDRLLAEGICDNDTVPSVSSINRIIRTK) are RED subdomain. The tract at residues 142 to 221 (VQQPFHPTPD…GDSQSSVESL (80 aa)) is disordered. Residues 163–175 (VPSTASPPVSSAS) show a composition bias toward low complexity.

Expression becomes spatially localized at mid-gastrula stages and is localized to the nervous system (midbrain, hindbrain, spinal cord), sensory organs (optic vesicle and stalk, otic vesicle), visceral arches, developing excretory system (pronephros, pronephric duct, rectal diverticulum, proctodaeum) and thryoid gland. Splicing does not appear to be tissue-specific.

It localises to the nucleus. Its function is as follows. Probable transcription factor. Involved in kidney development, acting synergistically with lhx1/lim-1 in pronephric morphogenesis during the tailbud stages. In Xenopus laevis (African clawed frog), this protein is Paired box protein Pax-2-B (pax2-b).